Reading from the N-terminus, the 596-residue chain is MGKKHKKHKAEWRSSYEDYTDTPLEKPLKLVLKVGGSEVTELSGSGHDSSYYDDRSDHERERHREKKKKKKKKSEKEKHLDEEERRKRKEEKKRKREKEHCDSEGEADAFDPGKKVEVEPPPDRPVRACRTQPAENESTPIQRLLEHFLRQLQRKDPHGFFAFPVTDAIAPGYSMIIKHPMDFGTMKDKIVANEYKSVTEFKADFKLMCDNAMTYNRPDTVYYKLAKKILHAGFKMMSKAALLGSEDPAAEEPVPEVVPVQVETTKKSKKPSREVISCMFEPEGNACSLTDSTAEEHVLALVEHAADEARDRINRFLPGGKMGYLKKLGDGSLLYSVVNAPEPDADEEETHPVDLSSLSSKLLPGFTTLGFKDERRNKVTFLSSASTALSMQNNSVFGDLKSDEMELLYSAYGDETGVQCALSLQEFVKDAGSYSKKMVDDLLDQITGGDHSRMIFQLKQRRSIPMRPADEMKVGDPLGESGGPVLDFMSMKQYPDVSLDVSMLSSLGKVKKELDHEDSHLNLDETARLLQDLHEAQAERGGSRPSSNLSSLSTASEREHPPPGSPSRLSVGEQPDVAHDPYEFLQSPEPAAPAKN.

A compositionally biased stretch (basic residues) spans 1–10 (MGKKHKKHKA). Disordered stretches follow at residues 1-26 (MGKK…PLEK) and 38-137 (EVTE…AENE). The segment covering 50–62 (SYYDDRSDHERER) has biased composition (basic and acidic residues). At Ser-56 the chain carries Phosphoserine. Residues 63–73 (HREKKKKKKKK) show a composition bias toward basic residues. Over residues 74-85 (SEKEKHLDEEER) the composition is skewed to basic and acidic residues. A compositionally biased stretch (basic residues) spans 86 to 97 (RKRKEEKKRKRE). A compositionally biased stretch (basic and acidic residues) spans 111 to 126 (DPGKKVEVEPPPDRPV). In terms of domain architecture, Bromo spans 136-240 (NESTPIQRLL…HAGFKMMSKA (105 aa)). Residues 214–216 (TYN) form a histone H4K5ac H4K8ac and histone H4K5bu H4K8bu binding region. Position 372 is an N6-acetyllysine; alternate (Lys-372). Lys-372 participates in a covalent cross-link: Glycyl lysine isopeptide (Lys-Gly) (interchain with G-Cter in SUMO2); alternate. The segment at 536–596 (AQAERGGSRP…SPEPAAPAKN (61 aa)) is disordered. The segment covering 543–555 (SRPSSNLSSLSTA) has biased composition (low complexity). Phosphoserine occurs at positions 565 and 587.

In terms of assembly, binds acetylated histones H3 and H4. Binds butyrylated histone H4. Component of the multiprotein chromatin-remodeling subcomplex SWI/SNF called GBAF, which includes at least BICRA or BICRAL (mutually exclusive), BRD9, SS18, the core BAF subunits, SMARCA2/BRM, SMARCA4/BRG1/BAF190A, ACTL6A/BAF53, SMARCC1/BAF155, and SMARCD1/BAF60A. Interacts (via N-terminal bromodomain) with acetylated RAD54. Interacts (via C-terminus) with RAD51.

The protein resides in the nucleus. Functionally, plays a role in chromatin remodeling and regulation of transcription. Acts as a chromatin reader that recognizes and binds acylated histones: binds histones that are acetylated and/or butyrylated. Component of SWI/SNF chromatin remodeling subcomplex GBAF that carries out key enzymatic activities, changing chromatin structure by altering DNA-histone contacts within a nucleosome in an ATP-dependent manner. Also orchestrates the RAD51-RAD54 complex formation and thereby plays a role in homologous recombination (HR). The polypeptide is Bromodomain-containing protein 9 (Brd9) (Mus musculus (Mouse)).